Here is a 475-residue protein sequence, read N- to C-terminus: UDP-glycosyltransferase 76E1 (475 aa).

The Proton acceptor role is filled by His-19. Residue His-19 participates in an anthocyanidin binding. Asp-109 (charge relay) is an active-site residue. UDP-alpha-D-glucose-binding residues include Thr-131, Ala-329, Gln-331, His-346, Trp-349, Asn-350, Ser-351, and Glu-354. Ala-369 is a binding site for an anthocyanidin. UDP-alpha-D-glucose contacts are provided by Asp-370 and Gln-371.

The protein belongs to the UDP-glycosyltransferase family. In terms of tissue distribution, expressed in flowers and fruits.

It is found in the cytoplasm. The protein resides in the nucleus. The enzyme catalyses 2-cis-(+)-abscisate + UDP-alpha-D-glucose = beta-D-glucopyranosyl cis-(+)-abscisate + UDP. Its function is as follows. Glucosyltransferase acting on abscisic acid (ABA) but not on auxin (IAA). The protein is UDP-glycosyltransferase 76E1 of Solanum lycopersicum (Tomato).